A 360-amino-acid polypeptide reads, in one-letter code: Phosphoserine aminotransferase (360 aa).

Arg-42 lines the L-glutamate pocket. Pyridoxal 5'-phosphate-binding positions include 76–77 (AS), Trp-102, Thr-152, Asp-172, and Gln-195. Lys-196 carries the post-translational modification N6-(pyridoxal phosphate)lysine. 237–238 (NT) lines the pyridoxal 5'-phosphate pocket.

The protein belongs to the class-V pyridoxal-phosphate-dependent aminotransferase family. SerC subfamily. In terms of assembly, homodimer. The cofactor is pyridoxal 5'-phosphate.

It is found in the cytoplasm. The catalysed reaction is O-phospho-L-serine + 2-oxoglutarate = 3-phosphooxypyruvate + L-glutamate. The enzyme catalyses 4-(phosphooxy)-L-threonine + 2-oxoglutarate = (R)-3-hydroxy-2-oxo-4-phosphooxybutanoate + L-glutamate. The protein operates within amino-acid biosynthesis; L-serine biosynthesis; L-serine from 3-phospho-D-glycerate: step 2/3. Functionally, catalyzes the reversible conversion of 3-phosphohydroxypyruvate to phosphoserine and of 3-hydroxy-2-oxo-4-phosphonooxybutanoate to phosphohydroxythreonine. This is Phosphoserine aminotransferase from Bacillus cereus (strain ATCC 10987 / NRS 248).